Consider the following 181-residue polypeptide: NADH-quinone oxidoreductase subunit I (181 aa).

4Fe-4S ferredoxin-type domains lie at 52 to 81 (TRDSAGHERCVACNLCAVSCPVGCISLKKS) and 91 to 120 (EFFRINFSRCIFCGMCEEACPTAAIQLISD). Residues cysteine 61, cysteine 64, cysteine 67, cysteine 71, cysteine 100, cysteine 103, cysteine 106, and cysteine 110 each coordinate [4Fe-4S] cluster.

This sequence belongs to the complex I 23 kDa subunit family. In terms of assembly, NDH-1 is composed of 13 different subunits. Subunits NuoA, H, J, K, L, M, N constitute the membrane sector of the complex. [4Fe-4S] cluster serves as cofactor.

Its subcellular location is the cell inner membrane. It catalyses the reaction a quinone + NADH + 5 H(+)(in) = a quinol + NAD(+) + 4 H(+)(out). In terms of biological role, NDH-1 shuttles electrons from NADH, via FMN and iron-sulfur (Fe-S) centers, to quinones in the respiratory chain. The immediate electron acceptor for the enzyme in this species is believed to be ubiquinone. Couples the redox reaction to proton translocation (for every two electrons transferred, four hydrogen ions are translocated across the cytoplasmic membrane), and thus conserves the redox energy in a proton gradient. The polypeptide is NADH-quinone oxidoreductase subunit I (Blochmanniella floridana).